Consider the following 204-residue polypeptide: Urease accessory protein UreG (204 aa).

13 to 20 (GPVGSGKT) provides a ligand contact to GTP.

It belongs to the SIMIBI class G3E GTPase family. UreG subfamily. As to quaternary structure, homodimer. UreD, UreF and UreG form a complex that acts as a GTP-hydrolysis-dependent molecular chaperone, activating the urease apoprotein by helping to assemble the nickel containing metallocenter of UreC. The UreE protein probably delivers the nickel.

The protein localises to the cytoplasm. Facilitates the functional incorporation of the urease nickel metallocenter. This process requires GTP hydrolysis, probably effectuated by UreG. In Acinetobacter baumannii (strain AB307-0294), this protein is Urease accessory protein UreG.